The following is a 192-amino-acid chain: Glycerol-3-phosphate acyltransferase (192 aa).

A run of 5 helical transmembrane segments spans residues 4–24 (MFWL…AILL), 54–74 (LAIL…LIAS), 80–100 (IAQQ…PVYF), 112–132 (AGVL…AWLL), and 154–174 (LLAW…LLIV).

Belongs to the PlsY family. As to quaternary structure, probably interacts with PlsX.

It is found in the cell inner membrane. It carries out the reaction an acyl phosphate + sn-glycerol 3-phosphate = a 1-acyl-sn-glycero-3-phosphate + phosphate. It participates in lipid metabolism; phospholipid metabolism. In terms of biological role, catalyzes the transfer of an acyl group from acyl-phosphate (acyl-PO(4)) to glycerol-3-phosphate (G3P) to form lysophosphatidic acid (LPA). This enzyme utilizes acyl-phosphate as fatty acyl donor, but not acyl-CoA or acyl-ACP. This is Glycerol-3-phosphate acyltransferase from Pseudomonas syringae pv. syringae (strain B728a).